Consider the following 347-residue polypeptide: FK506-binding protein-like (347 aa).

The tract at residues Met-1–Ala-24 is disordered. Residue Thr-3 is modified to Phosphothreonine. TPR repeat units lie at residues Ala-208–Leu-241, Thr-250–His-283, and Leu-284–Asn-317.

In terms of assembly, forms a ternary complex with CDKN1A/p21 and HSP90AB1/Hsp90.

May be involved in response to X-ray. Regulates p21 protein stability by binding to Hsp90 and p21. The polypeptide is FK506-binding protein-like (Fkbpl) (Mus musculus (Mouse)).